A 338-amino-acid chain; its full sequence is 1-aminocyclopropane-1-carboxylate deaminase (338 aa).

An N6-(pyridoxal phosphate)lysine modification is found at Lys51. The Nucleophile role is filled by Ser78.

This sequence belongs to the ACC deaminase/D-cysteine desulfhydrase family. Homotrimer. Pyridoxal 5'-phosphate serves as cofactor.

It catalyses the reaction 1-aminocyclopropane-1-carboxylate + H2O = 2-oxobutanoate + NH4(+). Its function is as follows. Catalyzes a cyclopropane ring-opening reaction, the irreversible conversion of 1-aminocyclopropane-1-carboxylate (ACC) to ammonia and alpha-ketobutyrate. Allows growth on ACC as a nitrogen source. The protein is 1-aminocyclopropane-1-carboxylate deaminase of Variovorax paradoxus.